We begin with the raw amino-acid sequence, 241 residues long: Uracil-DNA glycosylase (241 aa).

The Proton acceptor role is filled by Asp71.

This sequence belongs to the uracil-DNA glycosylase (UDG) superfamily. UNG family.

It localises to the cytoplasm. The enzyme catalyses Hydrolyzes single-stranded DNA or mismatched double-stranded DNA and polynucleotides, releasing free uracil.. Its function is as follows. Excises uracil residues from the DNA which can arise as a result of misincorporation of dUMP residues by DNA polymerase or due to deamination of cytosine. The polypeptide is Uracil-DNA glycosylase (Xanthomonas axonopodis pv. citri (strain 306)).